The following is a 274-amino-acid chain: Methionine-binding lipoprotein MetQ (274 aa).

Residues 1–19 form the signal peptide; it reads MKKLFLGALLLVFAGVMAA. A lipid anchor (N-palmitoyl cysteine) is attached at cysteine 20. Residue cysteine 20 is the site of S-diacylglycerol cysteine attachment.

Belongs to the NlpA lipoprotein family. As to quaternary structure, the complex is composed of two ATP-binding proteins (MetN), two transmembrane proteins (MetP) and a solute-binding protein (metQ).

It is found in the cell membrane. In terms of biological role, part of the ABC transporter complex MetNPQ involved in methionine import. Binds the methionine and transfers it to the membrane-bound permease. It has also been shown to be involved in methionine sulfoxide transport. The polypeptide is Methionine-binding lipoprotein MetQ (metQ) (Bacillus subtilis (strain 168)).